Here is a 478-residue protein sequence, read N- to C-terminus: Cytochrome c-552 (478 aa).

The first 27 residues, 1–27, serve as a signal peptide directing secretion; sequence MKKQWTRRSAAAIAMVTTLLLSSHSFA. Histidine 91 lines the heme c pocket. Residues cysteine 119, cysteine 122, and lysine 123 each coordinate heme. Positions 157, 160, 161, 206, 209, and 210 each coordinate heme c. Glutamate 212, tyrosine 213, lysine 258, and glutamine 260 together coordinate Ca(2+). Substrate is bound at residue tyrosine 213. Histidine 261 contributes to the substrate binding site. Residues histidine 272, cysteine 279, cysteine 282, histidine 283, histidine 298, cysteine 311, cysteine 314, histidine 315, and histidine 390 each contribute to the heme c site.

It belongs to the cytochrome c-552 family. It depends on Ca(2+) as a cofactor. Heme c is required as a cofactor.

The protein resides in the periplasm. It catalyses the reaction 6 Fe(III)-[cytochrome c] + NH4(+) + 2 H2O = 6 Fe(II)-[cytochrome c] + nitrite + 8 H(+). The protein operates within nitrogen metabolism; nitrate reduction (assimilation). Catalyzes the reduction of nitrite to ammonia, consuming six electrons in the process. In Aliivibrio fischeri (strain ATCC 700601 / ES114) (Vibrio fischeri), this protein is Cytochrome c-552.